The sequence spans 425 residues: Serine--tRNA ligase (425 aa).

Residue 230–232 participates in L-serine binding; sequence TAE. 261–263 is an ATP binding site; it reads RSE. Glu-284 lines the L-serine pocket. 348–351 contacts ATP; it reads EISS. Residue Ser-384 participates in L-serine binding.

It belongs to the class-II aminoacyl-tRNA synthetase family. Type-1 seryl-tRNA synthetase subfamily. In terms of assembly, homodimer. The tRNA molecule binds across the dimer.

It is found in the cytoplasm. The enzyme catalyses tRNA(Ser) + L-serine + ATP = L-seryl-tRNA(Ser) + AMP + diphosphate + H(+). The catalysed reaction is tRNA(Sec) + L-serine + ATP = L-seryl-tRNA(Sec) + AMP + diphosphate + H(+). It functions in the pathway aminoacyl-tRNA biosynthesis; selenocysteinyl-tRNA(Sec) biosynthesis; L-seryl-tRNA(Sec) from L-serine and tRNA(Sec): step 1/1. Functionally, catalyzes the attachment of serine to tRNA(Ser). Is also able to aminoacylate tRNA(Sec) with serine, to form the misacylated tRNA L-seryl-tRNA(Sec), which will be further converted into selenocysteinyl-tRNA(Sec). This Streptococcus gordonii (strain Challis / ATCC 35105 / BCRC 15272 / CH1 / DL1 / V288) protein is Serine--tRNA ligase.